The following is a 546-amino-acid chain: Chaperonin GroEL 6 (546 aa).

Residues 30–33 (TLGP), lysine 51, 87–91 (DGTTT), glycine 415, and aspartate 496 each bind ATP.

It belongs to the chaperonin (HSP60) family. In terms of assembly, forms a cylinder of 14 subunits composed of two heptameric rings stacked back-to-back. Interacts with the co-chaperonin GroES.

It localises to the cytoplasm. It carries out the reaction ATP + H2O + a folded polypeptide = ADP + phosphate + an unfolded polypeptide.. In terms of biological role, together with its co-chaperonin GroES, plays an essential role in assisting protein folding. The GroEL-GroES system forms a nano-cage that allows encapsulation of the non-native substrate proteins and provides a physical environment optimized to promote and accelerate protein folding. The polypeptide is Chaperonin GroEL 6 (Bradyrhizobium diazoefficiens (strain JCM 10833 / BCRC 13528 / IAM 13628 / NBRC 14792 / USDA 110)).